A 196-amino-acid chain; its full sequence is Flagellar transcriptional regulator FlhC (196 aa).

The Zn(2+) site is built by Cys138, Cys141, Cys158, and Cys161.

The protein belongs to the FlhC family. Heterohexamer composed of two FlhC and four FlhD subunits. Each FlhC binds a FlhD dimer, forming a heterotrimer, and a hexamer assembles by dimerization of two heterotrimers. Requires Zn(2+) as cofactor.

The protein localises to the cytoplasm. Its function is as follows. Functions in complex with FlhD as a master transcriptional regulator that regulates transcription of several flagellar and non-flagellar operons by binding to their promoter region. Activates expression of class 2 flagellar genes, including fliA, which is a flagellum-specific sigma factor that turns on the class 3 genes. Also regulates genes whose products function in a variety of physiological pathways. This Sodalis glossinidius (strain morsitans) protein is Flagellar transcriptional regulator FlhC.